A 279-amino-acid chain; its full sequence is uncharacterized protein (279 aa).

The segment at 60–92 (RKANKLNNKQDSTFFNSASGETNNTILPPGVKN) is disordered. The span at 70-85 (DSTFFNSASGETNNTI) shows a compositional bias: polar residues. 3 helical membrane passes run 156–176 (IVGY…AVMN), 202–222 (ISIF…ILFL), and 237–257 (FIWI…LLMI).

The protein resides in the cell membrane. This is an uncharacterized protein from Mycoplasma genitalium (strain ATCC 33530 / DSM 19775 / NCTC 10195 / G37) (Mycoplasmoides genitalium).